The chain runs to 113 residues: MNILDKIDAASLRDDVPAFRAGDTLDVHVKVIEGTTTRTQLFKGVVIRRQGGGIRETFTVRKVSFGIGVERTFPVHSPNIEKIEVVRRGDVRRAKLYYLRELRGKAARIKEKR.

The protein belongs to the bacterial ribosomal protein bL19 family.

Its function is as follows. This protein is located at the 30S-50S ribosomal subunit interface and may play a role in the structure and function of the aminoacyl-tRNA binding site. This chain is Large ribosomal subunit protein bL19, found in Corynebacterium glutamicum (strain R).